Reading from the N-terminus, the 65-residue chain is Large ribosomal subunit protein bL35 (65 aa).

It belongs to the bacterial ribosomal protein bL35 family.

This Psychrobacter sp. (strain PRwf-1) protein is Large ribosomal subunit protein bL35.